The chain runs to 29 residues: Varv peptide F (29 aa).

The segment at residues 1–29 (GVPICGETCTLGTCYTAGCSCSWPVCTRN) is a cross-link (cyclopeptide (Gly-Asn)). 3 disulfides stabilise this stretch: Cys5-Cys19, Cys9-Cys21, and Cys14-Cys26.

Post-translationally, this is a cyclic peptide.

In terms of biological role, probably participates in a plant defense mechanism. Has cytotoxic activity against a variety of drug-resistant and drug-sensitive human tumor cell lines. The sequence is that of Varv peptide F from Viola arvensis (European field pansy).